A 319-amino-acid chain; its full sequence is 4-hydroxy-3-methylbut-2-enyl diphosphate reductase (319 aa).

Position 17 (Cys-17) interacts with [4Fe-4S] cluster. Positions 46 and 79 each coordinate (2E)-4-hydroxy-3-methylbut-2-enyl diphosphate. Residues His-46 and His-79 each coordinate dimethylallyl diphosphate. Residues His-46 and His-79 each coordinate isopentenyl diphosphate. Cys-101 is a binding site for [4Fe-4S] cluster. His-129 contacts (2E)-4-hydroxy-3-methylbut-2-enyl diphosphate. Residue His-129 coordinates dimethylallyl diphosphate. Residue His-129 participates in isopentenyl diphosphate binding. Catalysis depends on Glu-131, which acts as the Proton donor. (2E)-4-hydroxy-3-methylbut-2-enyl diphosphate is bound at residue Thr-170. [4Fe-4S] cluster is bound at residue Cys-200. (2E)-4-hydroxy-3-methylbut-2-enyl diphosphate-binding residues include Ser-228, Ser-229, Asn-230, and Ser-273. Ser-228, Ser-229, Asn-230, and Ser-273 together coordinate dimethylallyl diphosphate. 4 residues coordinate isopentenyl diphosphate: Ser-228, Ser-229, Asn-230, and Ser-273.

It belongs to the IspH family. [4Fe-4S] cluster is required as a cofactor.

It carries out the reaction isopentenyl diphosphate + 2 oxidized [2Fe-2S]-[ferredoxin] + H2O = (2E)-4-hydroxy-3-methylbut-2-enyl diphosphate + 2 reduced [2Fe-2S]-[ferredoxin] + 2 H(+). It catalyses the reaction dimethylallyl diphosphate + 2 oxidized [2Fe-2S]-[ferredoxin] + H2O = (2E)-4-hydroxy-3-methylbut-2-enyl diphosphate + 2 reduced [2Fe-2S]-[ferredoxin] + 2 H(+). It participates in isoprenoid biosynthesis; dimethylallyl diphosphate biosynthesis; dimethylallyl diphosphate from (2E)-4-hydroxy-3-methylbutenyl diphosphate: step 1/1. The protein operates within isoprenoid biosynthesis; isopentenyl diphosphate biosynthesis via DXP pathway; isopentenyl diphosphate from 1-deoxy-D-xylulose 5-phosphate: step 6/6. Catalyzes the conversion of 1-hydroxy-2-methyl-2-(E)-butenyl 4-diphosphate (HMBPP) into a mixture of isopentenyl diphosphate (IPP) and dimethylallyl diphosphate (DMAPP). Acts in the terminal step of the DOXP/MEP pathway for isoprenoid precursor biosynthesis. The protein is 4-hydroxy-3-methylbut-2-enyl diphosphate reductase of Cereibacter sphaeroides (strain ATCC 17025 / ATH 2.4.3) (Rhodobacter sphaeroides).